The chain runs to 637 residues: Protein arginine N-methyltransferase 5 (637 aa).

A2 is subject to N-acetylalanine; in Protein arginine N-methyltransferase 5, N-terminally processed. Positions 13 to 292 (RVSSGRDLNC…YLEYLSQNRP (280 aa)) are TIM barrel. Residues 308 to 615 (LQSPLQPLMD…SNSKKVWYEW (308 aa)) enclose the SAM-dependent MTase PRMT-type domain. Position 324 (Y324) interacts with S-adenosyl-L-methionine. F327 is an a protein binding site. S-adenosyl-L-methionine-binding positions include 333-334 (KY), E392, and 419-420 (DM). Residues E435 and E444 each coordinate a protein. Active-site proton donor/acceptor residues include E435 and E444. Residues 465–637 (PGEYTSFLAP…PTGRSYTIGL (173 aa)) form a beta barrel region. Residues 488-494 (REKDRDP) form a dimerization region.

This sequence belongs to the class I-like SAM-binding methyltransferase superfamily. Protein arginine N-methyltransferase family. In terms of assembly, forms, at least, homodimers and homotetramers. Component of the methylosome complex, composed of PRMT5, WDR77 and CLNS1A. Found in a complex composed of PRMT5, WDR77 and RIOK1. RIOK1 and CLNS1A associate with PRMT5 in a mutually exclusive fashion, which allows the recruitment of distinct methylation substrates, such as nucleolin/NCL and Sm proteins, respectively. Interacts with PRDM1. Identified in a complex composed of methylosome and PRMT1 and ERH. Interacts with EGFR; methylates EGFR and stimulates EGFR-mediated ERK activation. Interacts with HOXA9. Interacts with SRGAP2. Found in a complex with COPRS, RUNX1 and CBFB. Interacts with CHTOP; the interaction symmetrically methylates CHTOP, but seems to require the presence of PRMT1. Interacts with EPB41L3; this modulates methylation of target proteins. Component of a high molecular weight E2F-pocket protein complex, CERC (cyclin E1 repressor complex). Associates with SWI/SNF remodeling complexes containing SMARCA2 and SMARCA4. Interacts with JAK2, SSTR1, SUPT5H, BRAF and with active RAF1. Interacts with LSM11, PRMT7 and SNRPD3. Interacts with COPRS; promoting its recruitment on histone H4. Interacts with CLNS1A/pICln. Identified in a complex with CLNS1A/pICln and Sm proteins. Interacts with RPS10. Interacts with WDR77. Interacts with IWS1. Interacts with CRY1. Interacts with POLR2A. Interacts with SMN1/SMN2. Interacts with LYAR; this interaction is direct. Interacts with TTC5/STRAP; this interaction is DNA damage-dependent and promotes PRMT5 interaction with p53/TP53. Interacts with p53/TP53 in response to DNA damage; the interaction is TTC5/STRAP dependent. Interacts with FAM47E; the interaction is direct, promotes PRMT5 localization to chromatin, and does not disrupt its association with WDR77 or STUB1. Interacts with TDRD6. Interacts with STUB1. Interacts with MBD2. Does not interact with MBD3. In terms of tissue distribution, ubiquitous.

It localises to the cytoplasm. Its subcellular location is the nucleus. The protein resides in the chromosome. It is found in the golgi apparatus. The catalysed reaction is L-arginyl-[protein] + 2 S-adenosyl-L-methionine = N(omega),N(omega)'-dimethyl-L-arginyl-[protein] + 2 S-adenosyl-L-homocysteine + 2 H(+). With respect to regulation, activity is increased by EGF, HGF, FGF1 or FGF2 treatments, and slightly decreased by NGF treatment. Its function is as follows. Arginine methyltransferase that can both catalyze the formation of omega-N monomethylarginine (MMA) and symmetrical dimethylarginine (sDMA), with a preference for the formation of MMA. Specifically mediates the symmetrical dimethylation of arginine residues in the small nuclear ribonucleoproteins Sm D1 (SNRPD1) and Sm D3 (SNRPD3); such methylation being required for the assembly and biogenesis of snRNP core particles. Methylates SUPT5H and may regulate its transcriptional elongation properties. May methylate the N-terminal region of MBD2. Mono- and dimethylates arginine residues of myelin basic protein (MBP) in vitro. May play a role in cytokine-activated transduction pathways. Negatively regulates cyclin E1 promoter activity and cellular proliferation. Methylates histone H2A and H4 'Arg-3' during germ cell development. Methylates histone H3 'Arg-8', which may repress transcription. Methylates the Piwi proteins (PIWIL1, PIWIL2 and PIWIL4), methylation of Piwi proteins being required for the interaction with Tudor domain-containing proteins and subsequent localization to the meiotic nuage. Methylates RPS10. Attenuates EGF signaling through the MAPK1/MAPK3 pathway acting at 2 levels. First, monomethylates EGFR; this enhances EGFR 'Tyr-1197' phosphorylation and PTPN6 recruitment, eventually leading to reduced SOS1 phosphorylation. Second, methylates RAF1 and probably BRAF, hence destabilizing these 2 signaling proteins and reducing their catalytic activity. Required for induction of E-selectin and VCAM-1, on the endothelial cells surface at sites of inflammation. Methylates HOXA9. Methylates and regulates SRGAP2 which is involved in cell migration and differentiation. Acts as a transcriptional corepressor in CRY1-mediated repression of the core circadian component PER1 by regulating the H4R3 dimethylation at the PER1 promoter. Methylates GM130/GOLGA2, regulating Golgi ribbon formation. Methylates H4R3 in genes involved in glioblastomagenesis in a CHTOP- and/or TET1-dependent manner. Symmetrically methylates POLR2A, a modification that allows the recruitment to POLR2A of proteins including SMN1/SMN2 and SETX. This is required for resolving RNA-DNA hybrids created by RNA polymerase II, that form R-loop in transcription terminal regions, an important step in proper transcription termination. Along with LYAR, binds the promoter of gamma-globin HBG1/HBG2 and represses its expression. Symmetrically methylates NCL. Methylates p53/TP53; methylation might possibly affect p53/TP53 target gene specificity. Involved in spliceosome maturation and mRNA splicing in prophase I spermatocytes through the catalysis of the symmetrical arginine dimethylation of SNRPB (small nuclear ribonucleoprotein-associated protein) and the interaction with tudor domain-containing protein TDRD6. The polypeptide is Protein arginine N-methyltransferase 5 (PRMT5) (Homo sapiens (Human)).